Here is a 430-residue protein sequence, read N- to C-terminus: Aspartate aminotransferase, mitochondrial (430 aa).

Residues 1–29 constitute a mitochondrion transit peptide; that stretch reads MALLHSGRALPGIAAAFHPGLAAAASARA. T48 bears the Phosphothreonine mark. K59 bears the N6-acetyllysine mark. Position 65 (G65) interacts with substrate. K73 is modified (N6-acetyllysine; alternate). The residue at position 73 (K73) is an N6-succinyllysine; alternate. An N6-acetyllysine modification is found at K82. Position 90 is an N6-acetyllysine; alternate (K90). Residue K90 is modified to N6-succinyllysine; alternate. At Y96 the chain carries 3'-nitrotyrosine; alternate. At Y96 the chain carries Phosphotyrosine; alternate. Residues K107 and K122 each carry the N6-acetyllysine; alternate modification. 2 positions are modified to N6-succinyllysine; alternate: K107 and K122. S143 bears the Phosphoserine mark. K159 carries the N6-acetyllysine; alternate modification. K159 carries the post-translational modification N6-succinyllysine; alternate. W162 provides a ligand contact to substrate. The residue at position 185 (K185) is an N6-acetyllysine; alternate. K185 carries the post-translational modification N6-succinyllysine; alternate. N215 contacts substrate. K227 is subject to N6-succinyllysine. Position 234 is an N6-acetyllysine (K234). N6-acetyllysine; alternate is present on residues K279 and K296. At K279 the chain carries N6-(pyridoxal phosphate)lysine; alternate. K296 is subject to N6-succinyllysine; alternate. The residue at position 302 (K302) is an N6-acetyllysine. An N6-acetyllysine; alternate modification is found at K309. Position 309 is an N6-succinyllysine; alternate (K309). R313 is subject to Asymmetric dimethylarginine. Phosphothreonine is present on T333. K338 carries the post-translational modification N6-acetyllysine; alternate. Position 338 is an N6-succinyllysine; alternate (K338). K345 is subject to N6-acetyllysine. An N6-acetyllysine; alternate modification is found at K363. Position 363 is an N6-succinyllysine; alternate (K363). An N6-acetyllysine mark is found at K364 and K387. N6-acetyllysine; alternate occurs at positions 396 and 404. N6-succinyllysine; alternate occurs at positions 396 and 404. R407 contacts substrate.

The protein belongs to the class-I pyridoxal-phosphate-dependent aminotransferase family. In terms of assembly, homodimer. Pyridoxal 5'-phosphate is required as a cofactor.

It localises to the mitochondrion matrix. The protein localises to the cell membrane. The enzyme catalyses L-aspartate + 2-oxoglutarate = oxaloacetate + L-glutamate. It carries out the reaction L-kynurenine + 2-oxoglutarate = kynurenate + L-glutamate + H2O. Functionally, catalyzes the irreversible transamination of the L-tryptophan metabolite L-kynurenine to form kynurenic acid (KA). As a member of the malate-aspartate shuttle, it has a key role in the intracellular NAD(H) redox balance. Is important for metabolite exchange between mitochondria and cytosol, and for amino acid metabolism. Facilitates cellular uptake of long-chain free fatty acids. In Pongo abelii (Sumatran orangutan), this protein is Aspartate aminotransferase, mitochondrial (GOT2).